The primary structure comprises 461 residues: Cysteine--tRNA ligase (461 aa).

Cys-29 provides a ligand contact to Zn(2+). Residues 31-41 (MTVYDLCHLGH) carry the 'HIGH' region motif. 3 residues coordinate Zn(2+): Cys-213, His-238, and Glu-242. Residues 270–274 (KMSKS) carry the 'KMSKS' region motif. Lys-273 provides a ligand contact to ATP.

It belongs to the class-I aminoacyl-tRNA synthetase family. As to quaternary structure, monomer. It depends on Zn(2+) as a cofactor.

Its subcellular location is the cytoplasm. It carries out the reaction tRNA(Cys) + L-cysteine + ATP = L-cysteinyl-tRNA(Cys) + AMP + diphosphate. The chain is Cysteine--tRNA ligase from Delftia acidovorans (strain DSM 14801 / SPH-1).